The primary structure comprises 273 residues: NAD-dependent protein deacylase (273 aa).

Residues 20 to 272 (RERLRQRIFF…PEFVEKLLKG (253 aa)) enclose the Deacetylase sirtuin-type domain. 48–67 (GAGISAESGIRTFRAADGLW) provides a ligand contact to NAD(+). Substrate contacts are provided by Tyr92 and Arg95. 129–132 (QNID) provides a ligand contact to NAD(+). His147 (proton acceptor) is an active-site residue. Positions 155 and 174 each coordinate Zn(2+). Residues 214–216 (GTS), 240–242 (NLE), and Ala258 each bind NAD(+).

The protein belongs to the sirtuin family. Class III subfamily. Requires Zn(2+) as cofactor.

The protein localises to the cytoplasm. It carries out the reaction N(6)-acetyl-L-lysyl-[protein] + NAD(+) + H2O = 2''-O-acetyl-ADP-D-ribose + nicotinamide + L-lysyl-[protein]. The catalysed reaction is N(6)-succinyl-L-lysyl-[protein] + NAD(+) + H2O = 2''-O-succinyl-ADP-D-ribose + nicotinamide + L-lysyl-[protein]. It catalyses the reaction N(6)-(2-hydroxyisobutanoyl)-L-lysyl-[protein] + NAD(+) + H2O = 2''-O-(2-hydroxyisobutanoyl)-ADP-D-ribose + nicotinamide + L-lysyl-[protein]. NAD-dependent lysine deacetylase that specifically removes acetyl groups on target proteins. Also acts as a protein-lysine deacylase by mediating protein desuccinylation and de-2-hydroxyisobutyrylation. Modulates the activities of several proteins which are inactive in their acylated form. The polypeptide is NAD-dependent protein deacylase (Escherichia coli O157:H7).